The chain runs to 134 residues: UPF0102 protein Dvul_2148 (134 aa).

This sequence belongs to the UPF0102 family.

This Nitratidesulfovibrio vulgaris (strain DP4) (Desulfovibrio vulgaris) protein is UPF0102 protein Dvul_2148.